The chain runs to 485 residues: Cyclic GMP-AMP synthase-like receptor (485 aa).

ATP is bound by residues Ser70 and 82–84 (EYD). Mg(2+) is bound by residues Glu82, Asp84, and Asp204. GTP-binding positions include Asp204 and 247–254 (RLSFYEQE). 2 residues coordinate ATP: Lys271 and Lys274. Residues Ile298 and Asp304 each coordinate Mn(2+).

This sequence belongs to the mab-21 family. The cofactor is Mg(2+). Mn(2+) is required as a cofactor.

It carries out the reaction GTP + ATP = 2',3'-cGAMP + 2 diphosphate. It catalyses the reaction GTP + ATP = pppGp(2'-5')A + diphosphate. The enzyme catalyses pppGp(2'-5')A = 2',3'-cGAMP + diphosphate. Its function is as follows. Nucleotidyltransferase that catalyzes the formation of cyclic GMP-AMP (2',3'-cGAMP) from ATP and GTP and plays a key role in innate immunity. Directly binds some unknown ligand, activating the nucleotidyltransferase activity, leading to synthesis of 2',3'-cGAMP, a second messenger that binds to and activates Sting, thereby triggering the immune response via activation of the NF-kappa-B transcription factor. This chain is Cyclic GMP-AMP synthase-like receptor, found in Trichogramma pretiosum (Parasitoid wasp).